We begin with the raw amino-acid sequence, 466 residues long: Myocardial zonula adherens protein (466 aa).

Over residues 1–10 the composition is skewed to polar residues; the sequence is MLRSTSTVTL. A signal peptide spans 1-20; the sequence is MLRSTSTVTLLSGGAARTPG. The disordered stretch occupies residues 1–23; sequence MLRSTSTVTLLSGGAARTPGAPS. Coiled-coil stretches lie at residues 96–142 and 174–418; these read QLKE…SHAQ and LQKT…TQAK. The Required for DYNLL1-binding motif lies at 424 to 425; it reads RE.

The protein belongs to the MYZAP family. Interacts with DSP, MPRIP and TJP1/ZO1. Interaction with MPRIP inhibits the activation of transcription factor SRF. Interacts with GRIN1. Interacts with DYNLL1. As to expression, detected in heart, liver, skeletal muscle, placenta, small intestine, lung, prostate and testis. Expressed in arrector pili muscle (at protein level).

The protein localises to the cytoplasm. The protein resides in the cytoskeleton. Its subcellular location is the cell membrane. It is found in the myofibril. It localises to the sarcomere. The protein localises to the i band. The protein resides in the z line. Its subcellular location is the cell junction. Functionally, plays a role in cellular signaling via Rho-related GTP-binding proteins and subsequent activation of transcription factor SRF. Targets TJP1 to cell junctions. In cortical neurons, may play a role in glutaminergic signal transduction through interaction with the NMDA receptor subunit GRIN1. The polypeptide is Myocardial zonula adherens protein (MYZAP) (Homo sapiens (Human)).